A 158-amino-acid polypeptide reads, in one-letter code: NADPH-dependent 7-cyano-7-deazaguanine reductase (158 aa).

Polar residues predominate over residues 1 to 13 (MAKRSNTTMTSAG). Positions 1 to 37 (MAKRSNTTMTSAGLQLGREVAPPDSPETAKLDRVPNP) are disordered. Over residues 27-37 (ETAKLDRVPNP) the composition is skewed to basic and acidic residues. Cys-56 functions as the Thioimide intermediate in the catalytic mechanism. Asp-63 (proton donor) is an active-site residue. Substrate contacts are provided by residues 78–80 (VES) and 97–98 (HE).

Belongs to the GTP cyclohydrolase I family. QueF type 1 subfamily.

It localises to the cytoplasm. It carries out the reaction 7-aminomethyl-7-carbaguanine + 2 NADP(+) = 7-cyano-7-deazaguanine + 2 NADPH + 3 H(+). It functions in the pathway tRNA modification; tRNA-queuosine biosynthesis. Functionally, catalyzes the NADPH-dependent reduction of 7-cyano-7-deazaguanine (preQ0) to 7-aminomethyl-7-deazaguanine (preQ1). This chain is NADPH-dependent 7-cyano-7-deazaguanine reductase, found in Bradyrhizobium sp. (strain ORS 278).